Reading from the N-terminus, the 88-residue chain is MEQQSYTIIDETGIHARPATMLVQTASKFDSDIQLEYNGKKVNLKSIMGVMSLGVGKDAEITIYADGSDEADAIQAITDVLSKEGLTE.

The HPr domain occupies 1 to 88 (MEQQSYTIID…DVLSKEGLTE (88 aa)). H15 (pros-phosphohistidine intermediate) is an active-site residue. S46 bears the Phosphoserine; by HPrK/P mark.

Belongs to the HPr family.

Its subcellular location is the cytoplasm. With respect to regulation, phosphorylation on Ser-46 inhibits the phosphoryl transfer from enzyme I to HPr. Its function is as follows. General (non sugar-specific) component of the phosphoenolpyruvate-dependent sugar phosphotransferase system (sugar PTS). This major carbohydrate active-transport system catalyzes the phosphorylation of incoming sugar substrates concomitantly with their translocation across the cell membrane. The phosphoryl group from phosphoenolpyruvate (PEP) is transferred to the phosphoryl carrier protein HPr by enzyme I. Phospho-HPr then transfers it to the PTS EIIA domain. In terms of biological role, P-Ser-HPr interacts with the catabolite control protein A (CcpA), forming a complex that binds to DNA at the catabolite response elements cre, operator sites preceding a large number of catabolite-regulated genes. Thus, P-Ser-HPr is a corepressor in carbon catabolite repression (CCR), a mechanism that allows bacteria to coordinate and optimize the utilization of available carbon sources. P-Ser-HPr also plays a role in inducer exclusion, in which it probably interacts with several non-PTS permeases and inhibits their transport activity. This Staphylococcus carnosus protein is Phosphocarrier protein HPr (ptsH).